Reading from the N-terminus, the 837-residue chain is Tuftelin-interacting protein 11 (837 aa).

2 stretches are compositionally biased toward basic and acidic residues: residues 1–13 (MSLS…GEGR) and 53–64 (VWAERDSDDERP). Disordered stretches follow at residues 1-21 (MSLS…DDER), 53-72 (VWAE…KRAR), and 85-133 (LKKG…KGFA). Residues 1 to 50 (MSLSHLYRDGEGRIDDDDDERENFEITDWDLQNEFNPNRQRHWQTKEEAT) form a required for interaction with DHX15 region. Phosphoserine occurs at positions 2, 59, and 98. Over residues 91–102 (EEAELEDSDDEE) the composition is skewed to acidic residues. Residues 103–116 (KPVKQDDFPKDFGP) show a composition bias toward basic and acidic residues. S144 is subject to Phosphoserine. The G-patch domain maps to 149–195 (TKGIGQKLLQKMGYVPGRGLGKNAQGIINPIEAKQRKGKGAVGAYGS). The tract at residues 179-236 (IEAKQRKGKGAVGAYGSERTTQSMQDFPVVDSEEEAEEEFQKELSQWRKDPSGSKKKP) is disordered. S210 is subject to Phosphoserine. A compositionally biased stretch (basic and acidic residues) spans 217-231 (EFQKELSQWRKDPSG). The Nuclear localization signal motif lies at 700-705 (VKDKFN). The required for nuclear speckle localization stretch occupies residues 710 to 734 (IMNRAVSSNVGAYMQPGARENIAYL).

This sequence belongs to the TFP11/STIP family. Identified in the spliceosome C complex. Found in the Intron Large (IL) complex, a post-mRNA release spliceosomal complex containing the excised intron, U2, U5 and U6 snRNPs, and splicing factors. Interacts with TUFT1. Interacts with DHX15; indicative for a recruitment of DHX15 to the IL complex. Interacts with GCFC2.

The protein resides in the cytoplasm. The protein localises to the nucleus. Its function is as follows. Involved in pre-mRNA splicing, specifically in spliceosome disassembly during late-stage splicing events. Intron turnover seems to proceed through reactions in two lariat-intron associated complexes termed Intron Large (IL) and Intron Small (IS). In cooperation with DHX15 seems to mediate the transition of the U2, U5 and U6 snRNP-containing IL complex to the snRNP-free IS complex leading to efficient debranching and turnover of excised introns. May play a role in the differentiation of ameloblasts and odontoblasts or in the forming of the enamel extracellular matrix. In Pan troglodytes (Chimpanzee), this protein is Tuftelin-interacting protein 11 (TFIP11).